The primary structure comprises 20 residues: Antifreeze protein (20 aa).

Post-translationally, N-glycosylated and O-glycosylated.

Its subcellular location is the secreted. It localises to the extracellular space. Functionally, antifreeze proteins bind to the surface of ice crystals and inhibit the growth of these crystals, this inhibition causes thermal hysteresis. Causes the shape of ice crystals to change from hexagonal to a bipyramidal shape with rugged facets. Inhibits recrystallization of ice crystals. The chain is Antifreeze protein from Antarctomyces psychrotrophicus.